Consider the following 1074-residue polypeptide: Insulin receptor substrate 2-A (1074 aa).

Positions 1–64 (MAGVLCPTEE…PPASAAEDDV (64 aa)) are disordered. Short sequence motifs (YXXM motif) lie at residues 33–36 (YRRM) and 145–148 (YFAM). Residues 63 to 168 (DVRKRGYLRK…WYQALSELIN (106 aa)) form the PH domain. An IRS-type PTB domain is found at 193 to 297 (FKEVWQVNVK…DTMKALKAYS (105 aa)). 3 disordered regions span residues 326 to 370 (PPSQ…RPFR), 426 to 461 (CSSS…SDEY), and 475 to 510 (SNTP…SRDD). The span at 347-361 (SAKNNSFRFRTSSEG) shows a compositional bias: polar residues. 2 stretches are compositionally biased toward low complexity: residues 426 to 435 (CSSSGHGSAS) and 442 to 454 (SSSS…SDGG). The segment covering 475-504 (SNTPDSLGNTPPIQEENTLSDYMSMSTHSQ) has biased composition (polar residues). 6 consecutive short sequence motifs (YXXM motif) follow at residues 496 to 499 (YMSM), 592 to 595 (YMPM), 605 to 608 (YLPM), 631 to 634 (YMMM), 663 to 666 (YMDM), and 710 to 713 (YVPM). Residues 801–821 (TPYSLSADGSPSSLGSSCDHR) form a disordered region. Residues 804–817 (SLSADGSPSSLGSS) show a composition bias toward low complexity. The short motif at 888–891 (YTTM) is the YXXM motif 9 element.

Phosphorylated by INSR.

In terms of biological role, potentiates insulin signaling. The protein is Insulin receptor substrate 2-A (irs2-a) of Xenopus laevis (African clawed frog).